The primary structure comprises 586 residues: Actin-related protein 9 (586 aa).

The segment at 141–169 (STPIVDKDADVDPLQRSTPDDTEPNSEEN) is disordered.

Belongs to the actin family. ARP8 subfamily.

In Oryza sativa subsp. indica (Rice), this protein is Actin-related protein 9 (ARP9).